Here is a 231-residue protein sequence, read N- to C-terminus: S-norcoclaurine synthase 1 (231 aa).

Position 107-109 (107-109 (YKE)) interacts with dopamine. Lysine 121 functions as the Proton donor in the catalytic mechanism. Aspartate 140 lines the (4-hydroxyphenyl)acetaldehyde pocket. Residues 210–230 (LLLCLIICLVIAGGMFVAGVP) form a helical membrane-spanning segment.

The protein belongs to the BetVI family. In terms of tissue distribution, detected in roots, stems, leaves, flower buds and germinating seeds.

It localises to the membrane. The enzyme catalyses (4-hydroxyphenyl)acetaldehyde + dopamine = (S)-norcoclaurine + H2O. The protein operates within alkaloid biosynthesis; (S)-reticuline biosynthesis. Its activity is regulated as follows. Activity doubles within 5 hours of elicitor treatment and continues to increase for at least 80 hours. Its function is as follows. Involved in the biosynthesis of (S)-coclaurine, the common precursor of all benzylisoquinoline alkaloids such as morphine, sanguinarine, codeine or papaverine. Condenses dopamine and 4-hydroxyphenylacetaldehyde. In Papaver somniferum (Opium poppy), this protein is S-norcoclaurine synthase 1.